Here is a 328-residue protein sequence, read N- to C-terminus: Phosphate acyltransferase (328 aa).

This sequence belongs to the PlsX family. Homodimer. Probably interacts with PlsY.

Its subcellular location is the cytoplasm. It carries out the reaction a fatty acyl-[ACP] + phosphate = an acyl phosphate + holo-[ACP]. The protein operates within lipid metabolism; phospholipid metabolism. Its function is as follows. Catalyzes the reversible formation of acyl-phosphate (acyl-PO(4)) from acyl-[acyl-carrier-protein] (acyl-ACP). This enzyme utilizes acyl-ACP as fatty acyl donor, but not acyl-CoA. The protein is Phosphate acyltransferase of Mycoplasma pneumoniae (strain ATCC 29342 / M129 / Subtype 1) (Mycoplasmoides pneumoniae).